Consider the following 73-residue polypeptide: Translation initiation factor IF-1 (73 aa).

One can recognise an S1-like domain in the interval 1 to 73; it reads MPKKEGVIEI…TRGRIVYRYK (73 aa).

The protein belongs to the IF-1 family. Component of the 30S ribosomal translation pre-initiation complex which assembles on the 30S ribosome in the order IF-2 and IF-3, IF-1 and N-formylmethionyl-tRNA(fMet); mRNA recruitment can occur at any time during PIC assembly.

It is found in the cytoplasm. Functionally, one of the essential components for the initiation of protein synthesis. Stabilizes the binding of IF-2 and IF-3 on the 30S subunit to which N-formylmethionyl-tRNA(fMet) subsequently binds. Helps modulate mRNA selection, yielding the 30S pre-initiation complex (PIC). Upon addition of the 50S ribosomal subunit IF-1, IF-2 and IF-3 are released leaving the mature 70S translation initiation complex. The sequence is that of Translation initiation factor IF-1 from Nocardioides sp. (strain ATCC BAA-499 / JS614).